A 73-amino-acid polypeptide reads, in one-letter code: Translation initiation factor IF-1 (73 aa).

In terms of domain architecture, S1-like spans 1-73 (MAKKDGVIEI…TRGRIVYRYK (73 aa)).

This sequence belongs to the IF-1 family. Component of the 30S ribosomal translation pre-initiation complex which assembles on the 30S ribosome in the order IF-2 and IF-3, IF-1 and N-formylmethionyl-tRNA(fMet); mRNA recruitment can occur at any time during PIC assembly.

The protein resides in the cytoplasm. In terms of biological role, one of the essential components for the initiation of protein synthesis. Stabilizes the binding of IF-2 and IF-3 on the 30S subunit to which N-formylmethionyl-tRNA(fMet) subsequently binds. Helps modulate mRNA selection, yielding the 30S pre-initiation complex (PIC). Upon addition of the 50S ribosomal subunit IF-1, IF-2 and IF-3 are released leaving the mature 70S translation initiation complex. The protein is Translation initiation factor IF-1 of Arthrobacter sp. (strain FB24).